A 347-amino-acid chain; its full sequence is Uroporphyrinogen decarboxylase (347 aa).

Substrate-binding positions include 36–40 (RQAGR), Asp-86, Tyr-160, Ser-212, and His-326.

This sequence belongs to the uroporphyrinogen decarboxylase family. In terms of assembly, homodimer.

Its subcellular location is the cytoplasm. The catalysed reaction is uroporphyrinogen III + 4 H(+) = coproporphyrinogen III + 4 CO2. It participates in porphyrin-containing compound metabolism; protoporphyrin-IX biosynthesis; coproporphyrinogen-III from 5-aminolevulinate: step 4/4. Its function is as follows. Catalyzes the decarboxylation of four acetate groups of uroporphyrinogen-III to yield coproporphyrinogen-III. The protein is Uroporphyrinogen decarboxylase of Wolbachia sp. subsp. Brugia malayi (strain TRS).